A 204-amino-acid chain; its full sequence is Transcription initiation factor TFIID subunit 11b (204 aa).

The disordered stretch occupies residues 38-60 (PFEAAMEEQEESPVETEQTLEGD). Residues 42–58 (AMEEQEESPVETEQTLE) show a composition bias toward acidic residues. The Histone-fold domain maps to 106 to 195 (FTEEQMSRYE…RRLKLQGKVP (90 aa)).

It belongs to the TAF11 family. Component of the TFIID complex. TFIID is composed of TATA binding protein (TBP) and a number of TBP-associated factors (TAFs) whose MWs range from 14-217 kDa. Expressed in roots, leaves and inflorescences.

It localises to the nucleus. In terms of biological role, TAFs are components of the transcription factor IID (TFIID) complex that is essential for mediating regulation of RNA polymerase transcription. This Arabidopsis thaliana (Mouse-ear cress) protein is Transcription initiation factor TFIID subunit 11b (TAF11B).